Reading from the N-terminus, the 606-residue chain is Mitogen-activated protein kinase kinase kinase 7 (606 aa).

An interaction with MAPK8IP1 region spans residues 1–300; sequence MSTASAASSS…FPGADEPLQY (300 aa). The 256-residue stretch at 36–291 folds into the Protein kinase domain; it reads IEVEEVVGRG…KIMTHLMRYF (256 aa). ATP-binding positions include 42–50 and Lys63; that span reads VGRGAFGVV. A Glycyl lysine isopeptide (Lys-Gly) (interchain with G-Cter in ubiquitin) cross-link involves residue Lys72. Asp156 functions as the Proton acceptor in the catalytic mechanism. Lys158 participates in a covalent cross-link: Glycyl lysine isopeptide (Lys-Gly) (interchain with G-Cter in ubiquitin). (Microbial infection) O-acetylthreonine; by Yersinia YopJ; alternate occurs at positions 184 and 187. A phosphothreonine; by autocatalysis; alternate mark is found at Thr184 and Thr187. Ser192 carries the post-translational modification Phosphoserine; by autocatalysis. Lys209 participates in a covalent cross-link: Glycyl lysine isopeptide (Lys-Gly) (interchain with G-Cter in ubiquitin). Residues 301 to 338 are disordered; the sequence is PCQYSDEGQSNSATSTGSFMDIASTNTSNKSDTNMEQV. Residues 306–338 show a composition bias toward polar residues; the sequence is DEGQSNSATSTGSFMDIASTNTSNKSDTNMEQV. Thr341 carries the (Microbial infection) O-acetylthreonine; by Yersinia YopJ; alternate modification. Positions 354–391 are disordered; it reads KNQAKQQSESGRLSLGASRGSSVESLPPTSEGKRMSAD. Low complexity predominate over residues 361–375; it reads SESGRLSLGASRGSS. Phosphoserine is present on residues Ser367, Ser389, and Ser439. Positions 443 to 452 are enriched in polar residues; the sequence is LTVTGTEPGQ. Positions 443–493 are disordered; that stretch reads LTVTGTEPGQVSSRSSSPSVRMITTSGPTSEKPTRSHPWTPDDSTDTNGSD. A (Microbial infection) O-acetylthreonine; by Yersinia YopJ; alternate mark is found at Thr444, Thr446, and Thr448. The segment covering 453–463 has biased composition (low complexity); sequence VSSRSSSPSVR. Ser455 carries the post-translational modification Phosphoserine. Over residues 464–473 the composition is skewed to polar residues; that stretch reads MITTSGPTSE. Thr467 is modified ((Microbial infection) O-acetylthreonine; by Yersinia YopJ; alternate).

This sequence belongs to the protein kinase superfamily. STE Ser/Thr protein kinase family. MAP kinase kinase kinase subfamily. As to quaternary structure, can form homodimer. Binds both upstream activators and downstream substrates in multimolecular complexes. Interacts with TAB1/MAP3K7IP1, TAB2/MAP3K7IP2 and TAB3/MAP3K7IP3. Identified in the TRIKA2 complex composed of MAP3K7/TAK1, TAB1/MAP3K7IP1 and TAB2/MAP3K7IP2. Interacts with PPM1L and PPM1B/PP2CB. Interaction with PP2A and PPP6C leads to its repressed activity. Interacts with TRAF6 and TAB1/MAP3K7IP1; during IL-1 signaling. Interacts with TAOK1 and TAOK2; interaction with TAOK2 interferes with MAP3K7 interaction with IKKA, thus preventing NF-kappa-B activation. Interacts with DYNC2I2 (via WD domains). Interacts with CYLD and RBCK1. Interacts with TGFBR1; induces MAP3K7/TAK1 activation by TRAF6. Interacts with MAPK8IP1 and SMAD6. Interacts with isoform 1 of VRK2. Interacts with DAB2; the interaction is induced by TGF-beta stimulation and may mediate TGF-beta stimulated JNK activation. Interacts with TRIM5. Part of a complex containing ITCH, NDFIP1 and MAP3K7. Interacts with IFIT5; the interaction synergizes the recruitment of IKK to MAP3K7 and enhances IKK phosphorylation. Interacts with PLEKHM1 (via N- and C-terminus). Interacts with TRIM8. Found in a complex with SH3RF1, RAC2, MAP2K7/MKK7, MAPK8IP1/JIP1, MAPK8/JNK1 and MAPK9/JNK2. Interacts with SASH1. Interacts with RIPK1. In terms of assembly, (Microbial infection) Interacts with herpes simplex virus 2 protein US2; this interaction induces MAP3K7 phosphorylation and subsequent activation. Mg(2+) is required as a cofactor. Post-translationally, association with TAB1/MAP3K7IP1 promotes autophosphorylation at Ser-192 and subsequent activation. Association with TAB2/MAP3K7IP2, itself associated with free unanchored Lys-63 polyubiquitin chain, promotes autophosphorylation and subsequent activation of MAP3K7. Dephosphorylation at Ser-192 by PPM1B/PP2CB and at Thr-187 by PP2A and PPP6C leads to inactivation. In terms of processing, 'Lys-48'-linked polyubiquitination at Lys-72 is induced by TNFalpha, and leads to proteasomal degradation. Undergoes 'Lys-48'-linked polyubiquitination catalyzed by ITCH. Requires 'Lys-63'-linked polyubiquitination for autophosphorylation and subsequent activation. 'Lys-63'-linked ubiquitination does not lead to proteasomal degradation. Deubiquitinated by CYLD, a protease that selectively cleaves 'Lys-63'-linked ubiquitin chains. Deubiquitinated by Y.enterocolitica YopP. Deubiquitinated by USP19; leading to negative regulation of TNF-alpha- and IL-1beta-triggered NF-kappa-B activation. (Microbial infection) Cleaved and inactivated by the proteases 3C of coxsackievirus A16 and human enterovirus D68, allowing the virus to disrupt TRAF6-triggered NF-kappa-B induction. Post-translationally, (Microbial infection) Acetylation of Thr-184 and Thr-187 by Yersinia YopJ prevents phosphorylation and activation, thus blocking the MAPK signaling pathway. In terms of tissue distribution, isoform 1A is the most abundant in ovary, skeletal muscle, spleen and blood mononuclear cells. Isoform 1B is highly expressed in brain, kidney and small intestine. Isoform 1C is the major form in prostate. Isoform 1D is the less abundant form.

The protein resides in the cytoplasm. Its subcellular location is the cell membrane. The enzyme catalyses L-seryl-[protein] + ATP = O-phospho-L-seryl-[protein] + ADP + H(+). The catalysed reaction is L-threonyl-[protein] + ATP = O-phospho-L-threonyl-[protein] + ADP + H(+). With respect to regulation, activated by pro-inflammatory cytokines and in response to physical and chemical stresses, including osmotic stress, oxidative stress, arsenic and ultraviolet light irradiation. Activated by 'Lys-63'-linked polyubiquitination and by autophosphorylation. Association with TAB1/MAP3K7IP1 and TAB2/MAP3K7IP2 promotes activation through autophosphorylation, whereas PPM1B/PP2CB, PP2A and PPP6C dephosphorylation leads to inactivation. Ceramides are also able to activate MAP3K7/TAK1. Its function is as follows. Serine/threonine kinase which acts as an essential component of the MAP kinase signal transduction pathway. Plays an important role in the cascades of cellular responses evoked by changes in the environment. Mediates signal transduction of TRAF6, various cytokines including interleukin-1 (IL-1), transforming growth factor-beta (TGFB), TGFB-related factors like BMP2 and BMP4, toll-like receptors (TLR), tumor necrosis factor receptor CD40 and B-cell receptor (BCR). Once activated, acts as an upstream activator of the MKK/JNK signal transduction cascade and the p38 MAPK signal transduction cascade through the phosphorylation and activation of several MAP kinase kinases like MAP2K1/MEK1, MAP2K3/MKK3, MAP2K6/MKK6 and MAP2K7/MKK7. These MAP2Ks in turn activate p38 MAPKs and c-jun N-terminal kinases (JNKs); both p38 MAPK and JNK pathways control the transcription factors activator protein-1 (AP-1). Independently of MAP2Ks and p38 MAPKs, acts as a key activator of NF-kappa-B by promoting activation of the I-kappa-B-kinase (IKK) core complex. Mechanistically, recruited to polyubiquitin chains of RIPK2 and IKBKG/NEMO via TAB2/MAP3K7IP2 and TAB3/MAP3K7IP3, and catalyzes phosphorylation and activation of IKBKB/IKKB component of the IKK complex, leading to NF-kappa-B activation. In osmotic stress signaling, plays a major role in the activation of MAPK8/JNK1, but not that of NF-kappa-B. Promotes TRIM5 capsid-specific restriction activity. Phosphorylates RIPK1 at 'Ser-321' which positively regulates RIPK1 interaction with RIPK3 to promote necroptosis but negatively regulates RIPK1 kinase activity and its interaction with FADD to mediate apoptosis. Phosphorylates STING1 in response to cGAMP-activation, promoting association between STEEP1 and STING1 and STING1 translocation to COPII vesicles. The chain is Mitogen-activated protein kinase kinase kinase 7 from Homo sapiens (Human).